The primary structure comprises 269 residues: 4-hydroxy-tetrahydrodipicolinate reductase (269 aa).

Residues 8–13 (GAAGRM) and Glu-34 contribute to the NAD(+) site. Residue Arg-35 coordinates NADP(+). Residues 98-100 (GTT) and 122-125 (APNY) each bind NAD(+). His-155 serves as the catalytic Proton donor/acceptor. His-156 lines the (S)-2,3,4,5-tetrahydrodipicolinate pocket. Lys-159 functions as the Proton donor in the catalytic mechanism. 165 to 166 (GT) contributes to the (S)-2,3,4,5-tetrahydrodipicolinate binding site.

It belongs to the DapB family.

Its subcellular location is the cytoplasm. The catalysed reaction is (S)-2,3,4,5-tetrahydrodipicolinate + NAD(+) + H2O = (2S,4S)-4-hydroxy-2,3,4,5-tetrahydrodipicolinate + NADH + H(+). It carries out the reaction (S)-2,3,4,5-tetrahydrodipicolinate + NADP(+) + H2O = (2S,4S)-4-hydroxy-2,3,4,5-tetrahydrodipicolinate + NADPH + H(+). It participates in amino-acid biosynthesis; L-lysine biosynthesis via DAP pathway; (S)-tetrahydrodipicolinate from L-aspartate: step 4/4. Its function is as follows. Catalyzes the conversion of 4-hydroxy-tetrahydrodipicolinate (HTPA) to tetrahydrodipicolinate. The sequence is that of 4-hydroxy-tetrahydrodipicolinate reductase from Vibrio vulnificus (strain CMCP6).